The sequence spans 960 residues: Phosphoenolpyruvate carboxylase 3 (960 aa).

At S8 the chain carries Phosphoserine. Active-site residues include H167 and K597.

The protein belongs to the PEPCase type 1 family. As to quaternary structure, homotetramer. Mg(2+) serves as cofactor.

It localises to the cytoplasm. It carries out the reaction oxaloacetate + phosphate = phosphoenolpyruvate + hydrogencarbonate. It participates in photosynthesis; C4 acid pathway. With respect to regulation, by light-reversible phosphorylation. In terms of biological role, through the carboxylation of phosphoenolpyruvate (PEP) it forms oxaloacetate, a four-carbon dicarboxylic acid source for the tricarboxylic acid cycle. This Sorghum bicolor (Sorghum) protein is Phosphoenolpyruvate carboxylase 3.